We begin with the raw amino-acid sequence, 145 residues long: Large ribosomal subunit protein uL15 (145 aa).

Residues 1–11 (MELHSLKSTPG) are compositionally biased toward polar residues. The tract at residues 1 to 48 (MELHSLKSTPGSRKEKHRKGRGHAAGKGKQAGKGQSGQRKRSKVRLGF) is disordered. Positions 14–26 (KEKHRKGRGHAAG) are enriched in basic residues.

This sequence belongs to the universal ribosomal protein uL15 family. As to quaternary structure, part of the 50S ribosomal subunit.

Binds to the 23S rRNA. This Mycoplasmopsis pulmonis (strain UAB CTIP) (Mycoplasma pulmonis) protein is Large ribosomal subunit protein uL15.